Reading from the N-terminus, the 195-residue chain is dITP/XTP pyrophosphatase (195 aa).

Residue 8–13 coordinates substrate; the sequence is TNNQGK. Residues Glu-39 and Asp-68 each contribute to the Mg(2+) site. Residue Asp-68 is the Proton acceptor of the active site. Residues Ser-69, 149–152, Lys-172, and 177–178 contribute to the substrate site; these read FGYD and HR.

This sequence belongs to the HAM1 NTPase family. As to quaternary structure, homodimer. Mg(2+) serves as cofactor.

It catalyses the reaction XTP + H2O = XMP + diphosphate + H(+). The catalysed reaction is dITP + H2O = dIMP + diphosphate + H(+). It carries out the reaction ITP + H2O = IMP + diphosphate + H(+). Its function is as follows. Pyrophosphatase that catalyzes the hydrolysis of nucleoside triphosphates to their monophosphate derivatives, with a high preference for the non-canonical purine nucleotides XTP (xanthosine triphosphate), dITP (deoxyinosine triphosphate) and ITP. Seems to function as a house-cleaning enzyme that removes non-canonical purine nucleotides from the nucleotide pool, thus preventing their incorporation into DNA/RNA and avoiding chromosomal lesions. In Staphylococcus epidermidis (strain ATCC 12228 / FDA PCI 1200), this protein is dITP/XTP pyrophosphatase.